The following is a 1235-amino-acid chain: MADREYTLSQKQAINSSGHNILVSASAGSGKTSVLVERVIQKIINGEDVDRLLVVTFTEAAASEMKERIRAAIVKKINEVSDIELQNHFSMQLNKLNNANISTLHAFCMSIIRNYYYIIDLDPTFRIMDPTESELLKESVWADLREELYERDEDGKFALLTRNFSSDRSDEGLQDLILELFEFSNANPDPQAWLQQIAKNYEVPSDNVMDMEFIQQLLTEVKTKLMRIYRKDLDLTEQAINGGEPLKNAAEKFQNEVDDLKTIIDSLNGSWDDVQQAVSKMKFAQLPRGKKEEVQEFNAYAKSIRNDFKDEFNTIADKYFKLSSEQMIAVFKDAHDLMMKLIEVQNQFAERFLQEKLTRRSLDFSDLEHFALQIVLDDSEEGQAIRRDFQQKFNEVIVDEYQDINPLQETILTSVASPDPGNMFMVGDVKQSIYAFRMADPSLFISKNNQFKDEEQADERIILAENFRSMRNVDDFTNLIFNQVMDTEVGEIEYDDDAQLQFGAKYYPDEVQNNTEVMIYDDSQTDINDKEATPIISNKNDGQLQMIAQRIQKLFADHTQIYDKKEQKMRDLEYSDIALLHSTGSNNLEIVDTFKKYGIPIQVNNAQDYFQTTEVSIMMALLKIIDNPYQDIPLAAVLRSPMVGLKENELAFLRIGKKNGHYFEALLYFLNEAKLDSNNEFQMQLKTKITHFLEQLDHFSKLARQSTLVDLLWAIYDETGYLDYVGGMPDGPQRQNNLHALYDRAKGYEESSFKGLFQFVRFVEKMRDKNKDLAENPVVTDVKAVKLMTIHGSKGLEFPIVFLIDAEHGFNTMDEKGRYVLDRDAGMGITLKDFIHRLEIDTVQKNWIISIKKQKALAEKLRVLYVALTRAEQKLIITGAVNSADDTLNKWAEAVDTDETLIPAEARSKVSNFLDWIGMAIMRVPSVVEKYADYNTRKLQGTLIPDVELKIINSSELMDQQGLTALKSAQIPELQQLNAFDDIADVDKFKQIMNFKYHDEAATTTTAYQSVSEIKRVFDDPDKFELNFSEVDADQHIKPQNRFVTESLMAPRFMNEATKPKAAEIGTATHLILQQLDLNQPINETIIKDKIGELVMNRVLDEQVANRIRISTILDFFDSDLGQLMINHPENVHREEAFSLLLPAKGLFPKVKGDDDVLIHGIIDAYFEMEDRVILLDYKTDFVLPGSVEQGIEKVINRYQGQVNLYAQALGSILKRPVNEKYLYLLSIGRLVEIQ.

Positions 4–470 (REYTLSQKQA…IILAENFRSM (467 aa)) constitute a UvrD-like helicase ATP-binding domain. 25–32 (ASAGSGKT) provides a ligand contact to ATP. The region spanning 501-795 (QFGAKYYPDE…KLMTIHGSKG (295 aa)) is the UvrD-like helicase C-terminal domain.

This sequence belongs to the helicase family. AddA subfamily. In terms of assembly, heterodimer of AddA and AddB/RexB. It depends on Mg(2+) as a cofactor.

It carries out the reaction Couples ATP hydrolysis with the unwinding of duplex DNA by translocating in the 3'-5' direction.. It catalyses the reaction ATP + H2O = ADP + phosphate + H(+). The heterodimer acts as both an ATP-dependent DNA helicase and an ATP-dependent, dual-direction single-stranded exonuclease. Recognizes the chi site generating a DNA molecule suitable for the initiation of homologous recombination. The AddA nuclease domain is required for chi fragment generation; this subunit has the helicase and 3' -&gt; 5' nuclease activities. The sequence is that of ATP-dependent helicase/nuclease subunit A from Pediococcus pentosaceus (strain ATCC 25745 / CCUG 21536 / LMG 10740 / 183-1w).